Reading from the N-terminus, the 560-residue chain is Serine/threonine-protein kinase TOS3 (560 aa).

The Protein kinase domain occupies 50-344 (FEILATLGNG…LADIKVHPFM (295 aa)). Residues 56-64 (LGNGQYGKV) and lysine 79 contribute to the ATP site. The active-site Proton acceptor is aspartate 189.

It belongs to the protein kinase superfamily. Ser/Thr protein kinase family. In terms of processing, autophosphorylated.

It carries out the reaction L-seryl-[protein] + ATP = O-phospho-L-seryl-[protein] + ADP + H(+). It catalyses the reaction L-threonyl-[protein] + ATP = O-phospho-L-threonyl-[protein] + ADP + H(+). One of the three SNF1 protein kinases (with SAK1 and ELM1) which are required for growth on nonfermentable carbon sources and nonpreferred sugars and for response to environmental stress. Activates SNF1 by phosphorylation of its activation-loop 'Thr-210'. Required for the regulation by SNF1 of the transcription of a large set of genes, the modification the activity of metabolic enzymes, and the control of various nutrient-responsive cellular developmental processes. Also phosphorylates GAL83, MIG1 and SIP2. This Saccharomyces cerevisiae (strain YJM789) (Baker's yeast) protein is Serine/threonine-protein kinase TOS3 (TOS3).